A 201-amino-acid chain; its full sequence is Recombination protein RecR (201 aa).

Residues 60 to 75 form a C4-type zinc finger; the sequence is CSVCGNVDSCDPCTIC. One can recognise a Toprim domain in the interval 83 to 178; it reads STLIVVETVG…RTTRLAHGVP (96 aa).

The protein belongs to the RecR family.

Its function is as follows. May play a role in DNA repair. It seems to be involved in an RecBC-independent recombinational process of DNA repair. It may act with RecF and RecO. This Methylocella silvestris (strain DSM 15510 / CIP 108128 / LMG 27833 / NCIMB 13906 / BL2) protein is Recombination protein RecR.